A 494-amino-acid chain; its full sequence is Lysine--tRNA ligase (494 aa).

Residues glutamate 407 and glutamate 414 each contribute to the Mg(2+) site.

It belongs to the class-II aminoacyl-tRNA synthetase family. As to quaternary structure, homodimer. Mg(2+) serves as cofactor.

It is found in the cytoplasm. It catalyses the reaction tRNA(Lys) + L-lysine + ATP = L-lysyl-tRNA(Lys) + AMP + diphosphate. The sequence is that of Lysine--tRNA ligase from Lactococcus lactis subsp. cremoris (strain MG1363).